The sequence spans 367 residues: UDP-N-acetylglucosamine--N-acetylmuramyl-(pentapeptide) pyrophosphoryl-undecaprenol N-acetylglucosamine transferase (367 aa).

UDP-N-acetyl-alpha-D-glucosamine is bound by residues 22–24 (TGG), N134, R170, S198, I253, and Q298.

It belongs to the glycosyltransferase 28 family. MurG subfamily.

It localises to the cell inner membrane. It catalyses the reaction di-trans,octa-cis-undecaprenyl diphospho-N-acetyl-alpha-D-muramoyl-L-alanyl-D-glutamyl-meso-2,6-diaminopimeloyl-D-alanyl-D-alanine + UDP-N-acetyl-alpha-D-glucosamine = di-trans,octa-cis-undecaprenyl diphospho-[N-acetyl-alpha-D-glucosaminyl-(1-&gt;4)]-N-acetyl-alpha-D-muramoyl-L-alanyl-D-glutamyl-meso-2,6-diaminopimeloyl-D-alanyl-D-alanine + UDP + H(+). Its pathway is cell wall biogenesis; peptidoglycan biosynthesis. Its function is as follows. Cell wall formation. Catalyzes the transfer of a GlcNAc subunit on undecaprenyl-pyrophosphoryl-MurNAc-pentapeptide (lipid intermediate I) to form undecaprenyl-pyrophosphoryl-MurNAc-(pentapeptide)GlcNAc (lipid intermediate II). The protein is UDP-N-acetylglucosamine--N-acetylmuramyl-(pentapeptide) pyrophosphoryl-undecaprenol N-acetylglucosamine transferase of Xylella fastidiosa (strain M23).